Reading from the N-terminus, the 157-residue chain is Protein Smg (157 aa).

This sequence belongs to the Smg family.

The chain is Protein Smg from Sodalis glossinidius (strain morsitans).